A 219-amino-acid chain; its full sequence is Transmembrane emp24 domain-containing protein 10 (219 aa).

An N-terminal signal peptide occupies residues 1-31; the sequence is MSGLSGPPTRRGPFPLALLLLFLLGPSLVLA. Residues 1–142 are required for interaction with STX17; it reads MSGLSGPPTR…KNYEEIAKVE (142 aa). Residues 32-185 are Lumenal-facing; the sequence is ISFHLPINSR…RDTNESTNTR (154 aa). A GOLD domain is found at 41-193; sequence RKCLREEIHK…TRVLYFSIFS (153 aa). A dimethylated arginine mark is found at Arg-171 and Arg-176. Residue Asn-179 is glycosylated (N-linked (GlcNAc...) asparagine). Residues 186–206 traverse the membrane as a helical segment; the sequence is VLYFSIFSMFCLIGLATWQVF. Residues 204 to 219 form an interaction with COPG1 region; sequence QVFYLRRFFKAKKLIE. Over 207 to 219 the chain is Cytoplasmic; that stretch reads YLRRFFKAKKLIE. The tract at residues 207–219 is interaction with ARF1 and IL1B; the sequence is YLRRFFKAKKLIE. The COPII vesicle coat-binding motif lies at 211 to 212; it reads FF. Residues 211 to 219 carry the COPI vesicle coat-binding motif; it reads FFKAKKLIE.

The protein belongs to the EMP24/GP25L family. Predominantly dimeric and to a lesser extent monomeric in the ER. Monomer and dimer in ERGIC and cis-Golgi network. Forms homooligomer (via GOLD domain); the assembly is promoted by direct binding with leaderless cargos and may form a protein channel that facilitates cargo entry into the ERGIC. Forms heterooligomeric complexes with other members of the p24 family such as TMED2, TMED7 and TMED9. Interacts (via GOLD domain) with TMED2 (via GOLD domain); the complex is required for export of TMED10 from the ER to the cis-Golgi network; the complex is proposed to be involved in cis-Golgi network dynamics and / or biogenesis. Associates with the COPI vesicle coat subunits (coatomer). Tetramerization of the cytoplasmic domain at the Golgi membrane in vitro; the complex is proposed to interact with COPI coatomer and induce budding of the vesicles. Interacts with COPG1; the interaction involves TMED10 homodimer. Interacts with ARF1 (GDP-bound); the interaction probably involves a TMED10 oligomer. Interacts with SEC23A, SEC24B, SEC24C and SEC24D components of the coat protein complex II/COPII, indicative of an association of TMED10 with the COPII vesicle coat. Interacts with CD59. Interacts with MPPE1/PGAP5; the complex might recruit and sort GPI-anchored proteins to the ER-exit site, or the interaction might lead to recycling of PGAP5 between the ER and the Golgi. Interacts with F2LR1/PAR2. Interacts with KDELR2/ERD2; the interaction is disrupted by KDELR2 ligand. Found in a complex composed at least of SURF4, TMED2 and TMED10. Associates with the presenilin-dependent gamma-secretase complex. Interacts with STX17; the interaction is direct. Interacts with IL-1; the interaction is direct. Interacts with RAB21 (active GTP-bound form); the interaction is indirect and regulates TMED10 abundance and localization at the Golgi.

Its subcellular location is the endoplasmic reticulum membrane. The protein resides in the endoplasmic reticulum-Golgi intermediate compartment membrane. The protein localises to the golgi apparatus membrane. It localises to the golgi apparatus. It is found in the cis-Golgi network membrane. Its subcellular location is the trans-Golgi network membrane. The protein resides in the cytoplasmic vesicle. The protein localises to the secretory vesicle membrane. It localises to the cell membrane. It is found in the melanosome. Cargo receptor involved in protein vesicular trafficking and quality control in the endoplasmic reticulum (ER) and Golgi. The p24 protein family is a group of transmembrane proteins that bind coat protein complex I/COPI and coat protein complex II/COPII involved in vesicular trafficking between the membranes. Acts at the lumenal side for incorporation of secretory cargo molecules into transport vesicles and involved in vesicle coat formation at the cytoplasmic side. Mainly functions in the early secretory pathway and cycles between the ER, ER-Golgi intermediate compartment (ERGIC) and Golgi, mediating cargo transport through COPI and COPII-coated vesicles. In COPII vesicle-mediated anterograde transport, involved in the transport of GPI-anchored proteins by acting together with TMED2 as their cargo receptor; the function specifically implies SEC24C and SEC24D of the COPII vesicle coat and lipid raft-like microdomains of the ER. Recognizes GPI anchors structural remodeled in the ER by the GPI inositol-deacylase/PGAP1 and the metallophosphoesterase MPPE1/PGAP5. In COPI vesicle-mediated retrograde transport, involved in the biogenesis of COPI vesicles and vesicle coat recruitment. Involved in trafficking of amyloid beta A4 protein and soluble APP-beta release (independent from the modulation of gamma-secretase activity). Involved in the KDELR2-mediated retrograde transport of the toxin A subunit (CTX-A-K63)together with COPI and the COOH terminus of KDELR2. On Golgi membranes, acts as a primary receptor for ARF1-GDP, a GTP-binding protein involved in COPI-vesicle formation. Increases coatomer-dependent GTPase-activating activity of ARFGAP2 which mediates the hydrolysis of ARF1-bound GTP and therefore modulates protein trafficking from the Golgi apparatus. Involved in the exocytic trafficking of G protein-coupled receptors F2LR1/PAR2 (trypsin and tryspin-like enzyme receptor), OPRM1 (opioid receptor) and P2RY4 (UTD and UDP receptor) from the Golgi to the plasma membrane, thus contributing to receptor resensitization. In addition to its cargo receptor activity, may also act as a protein channel after oligomerization, facilitating the post-translational entry of leaderless cytoplasmic cargo into the ERGIC. Involved in the translocation into ERGIC, the vesicle entry and the secretion of leaderless cargos (lacking the secretion signal sequence), including the mature form of interleukin 1/IL-1 family members, the alpha-crystallin B chain HSPB5, the carbohydrate-binding proteins galectin-1/LGALS1 and galectin-3/LGALS3, the microtubule-associated protein Tau/MAPT, and the annexin A1/ANXA1; the translocation process is dependent on cargo protein unfolding and enhanced by chaperones HSP90AB1 and HSP90B1/GRP9. Could also associates with the presenilin-dependent gamma-secretase complex in order to regulate gamma-cleavages of the amyloid beta A4 protein to yield amyloid-beta 40/Abeta40. The chain is Transmembrane emp24 domain-containing protein 10 (TMED10) from Pongo abelii (Sumatran orangutan).